The following is a 210-amino-acid chain: Large ribosomal subunit protein bL25 (210 aa).

A disordered region spans residues 1 to 23 (MSDIGTLSAKGRDRAGKGAARAT).

The protein belongs to the bacterial ribosomal protein bL25 family. CTC subfamily. As to quaternary structure, part of the 50S ribosomal subunit; part of the 5S rRNA/L5/L18/L25 subcomplex. Contacts the 5S rRNA. Binds to the 5S rRNA independently of L5 and L18.

Its function is as follows. This is one of the proteins that binds to the 5S RNA in the ribosome where it forms part of the central protuberance. The protein is Large ribosomal subunit protein bL25 of Rhodospirillum rubrum (strain ATCC 11170 / ATH 1.1.1 / DSM 467 / LMG 4362 / NCIMB 8255 / S1).